The primary structure comprises 56 residues: Lantibiotic subtilin (56 aa).

Positions 1 to 24 are excised as a propeptide; it reads MSKFDDFDLDVVKVSKQDSKITPQ. At tryptophan 25 the chain carries N2-succinyltryptophan; partial. Positions 27-31 form a cross-link, lanthionine (Ser-Cys); the sequence is SESLC. Residue serine 29 is modified to 2,3-didehydroalanine (Ser). Cross-links (beta-methyllanthionine (Thr-Cys)) lie at residues 32–35, 37–43, 47–50, and 49–52; these read TPGC, TGALQTC, TLTC, and TCNC. Position 42 is a (Z)-2,3-didehydrobutyrine (threonine 42). Serine 55 is modified (2,3-didehydroalanine (Ser)).

Belongs to the type A lantibiotic family. In terms of processing, maturation of lantibiotics involves the enzymatic conversion of Thr, and Ser into dehydrated AA and the formation of thioether bonds with cysteine. This is followed by membrane translocation and cleavage of the modified precursor. Succinylated subtilin is 10-20 times less active than subtilin. The ratio subtilin/succinylated subtilin is about 1:2 after 24 hours growth. Post-translationally, the 2,3-didehydrobutyrine is determined to be the Z-isomer.

In terms of biological role, lanthionine-containing peptide antibiotic (lantibiotic) active on Gram-positive bacteria. The bactericidal activity of lantibiotics is based on depolarization of energized bacterial cytoplasmic membranes, initiated by the formation of aqueous transmembrane pores. This chain is Lantibiotic subtilin (spaS), found in Bacillus subtilis.